We begin with the raw amino-acid sequence, 92 residues long: Small ribosomal subunit protein bS20 (92 aa).

It belongs to the bacterial ribosomal protein bS20 family.

Its function is as follows. Binds directly to 16S ribosomal RNA. The protein is Small ribosomal subunit protein bS20 of Methylacidiphilum infernorum (isolate V4) (Methylokorus infernorum (strain V4)).